We begin with the raw amino-acid sequence, 258 residues long: Large ribosomal subunit protein bL28m (258 aa).

Residues 1-21 (MQKIFRPFQLTRGFTSSVKNF) constitute a mitochondrion transit peptide.

It belongs to the bacterial ribosomal protein bL28 family. As to quaternary structure, component of the mitochondrial large ribosomal subunit (mt-LSU). Mature yeast 74S mitochondrial ribosomes consist of a small (37S) and a large (54S) subunit. The 37S small subunit contains a 15S ribosomal RNA (15S mt-rRNA) and 34 different proteins. The 54S large subunit contains a 21S rRNA (21S mt-rRNA) and 46 different proteins.

The protein resides in the mitochondrion. Its function is as follows. Component of the mitochondrial ribosome (mitoribosome), a dedicated translation machinery responsible for the synthesis of mitochondrial genome-encoded proteins, including at least some of the essential transmembrane subunits of the mitochondrial respiratory chain. The mitoribosomes are attached to the mitochondrial inner membrane and translation products are cotranslationally integrated into the membrane. The sequence is that of Large ribosomal subunit protein bL28m (MRPL24) from Saccharomyces cerevisiae (strain ATCC 204508 / S288c) (Baker's yeast).